A 547-amino-acid chain; its full sequence is Apolipoprotein N-acyltransferase (547 aa).

6 consecutive transmembrane segments (helical) span residues 31–51 (PLPA…AAHA), 65–85 (GWLF…VSMH), 89–109 (GLAA…LALF), 144–164 (AACW…FPWL), 181–201 (LLGV…LAGL), and 215–235 (LAAG…QFSW). A CN hydrolase domain is found at 248–511 (VQGNVEQSQK…AGVLPVAVQG (264 aa)). The active-site Proton acceptor is Glu292. Lys366 is a catalytic residue. Cys416 (nucleophile) is an active-site residue.

Belongs to the CN hydrolase family. Apolipoprotein N-acyltransferase subfamily.

It localises to the cell inner membrane. It catalyses the reaction N-terminal S-1,2-diacyl-sn-glyceryl-L-cysteinyl-[lipoprotein] + a glycerophospholipid = N-acyl-S-1,2-diacyl-sn-glyceryl-L-cysteinyl-[lipoprotein] + a 2-acyl-sn-glycero-3-phospholipid + H(+). Its pathway is protein modification; lipoprotein biosynthesis (N-acyl transfer). Its function is as follows. Catalyzes the phospholipid dependent N-acylation of the N-terminal cysteine of apolipoprotein, the last step in lipoprotein maturation. In Bordetella bronchiseptica (strain ATCC BAA-588 / NCTC 13252 / RB50) (Alcaligenes bronchisepticus), this protein is Apolipoprotein N-acyltransferase.